The primary structure comprises 459 residues: Phosphoglucosamine mutase (459 aa).

S112 acts as the Phosphoserine intermediate in catalysis. Mg(2+) contacts are provided by S112, D249, D251, and D253. Position 112 is a phosphoserine (S112).

This sequence belongs to the phosphohexose mutase family. Mg(2+) serves as cofactor. Activated by phosphorylation.

It carries out the reaction alpha-D-glucosamine 1-phosphate = D-glucosamine 6-phosphate. Catalyzes the conversion of glucosamine-6-phosphate to glucosamine-1-phosphate. The sequence is that of Phosphoglucosamine mutase from Synechococcus sp. (strain RCC307).